We begin with the raw amino-acid sequence, 852 residues long: Protein SEY1 (852 aa).

Residues 1–738 (MNGHFAAVGN…KRSAIGGITQ (738 aa)) lie on the Cytoplasmic side of the membrane. In terms of domain architecture, GB1/RHD3-type G spans 47–283 (GFNYHLISVF…FVGGVFLPEY (237 aa)). 57–64 (GSQSTGKS) provides a ligand contact to GTP. Residues 475–500 (QYRLFEKELDEVSARLRKEEMRRLAI) adopt a coiled-coil conformation. A helical membrane pass occupies residues 739 to 759 (VPLYFYIVLLIFGWNEIVMVL). Topologically, residues 760-762 (RNP) are lumenal. A helical membrane pass occupies residues 763–783 (MLFMLLLVMGGGTYVAYTLNL). Residues 784 to 852 (LGPMMQMANA…AQEVEEDDDI (69 aa)) lie on the Cytoplasmic side of the membrane. The tract at residues 825 to 852 (RSQDNGIGMDRLDSRGKKAQEVEEDDDI) is disordered. The span at 834–845 (DRLDSRGKKAQE) shows a compositional bias: basic and acidic residues.

Belongs to the TRAFAC class dynamin-like GTPase superfamily. GB1/RHD3 GTPase family. RHD3 subfamily.

Its subcellular location is the endoplasmic reticulum membrane. Its function is as follows. Cooperates with the reticulon proteins and tubule-shaping DP1 family proteins to generate and maintain the structure of the tubular endoplasmic reticulum network. Has GTPase activity, which is required for its function in ER organization. The polypeptide is Protein SEY1 (Chaetomium globosum (strain ATCC 6205 / CBS 148.51 / DSM 1962 / NBRC 6347 / NRRL 1970) (Soil fungus)).